The following is a 189-amino-acid chain: Ras-like protein 1 (189 aa).

10 to 17 contributes to the GTP binding site; it reads GGGGVGKS. The Effector region motif lies at 32-40; sequence YDPTIEDSY. Residues 57–61 and 116–119 each bind GTP; these read DTAGQ and NKCD. A Cysteine methyl ester modification is found at Cys186. The S-geranylgeranyl cysteine moiety is linked to residue Cys186. The propeptide at 187-189 is removed in mature form; that stretch reads LLL.

It belongs to the small GTPase superfamily. Ras family.

It localises to the cell membrane. The enzyme catalyses GTP + H2O = GDP + phosphate + H(+). Functionally, ras proteins bind GDP/GTP and possess intrinsic GTPase activity. This Physarum polycephalum (Slime mold) protein is Ras-like protein 1 (RAS1).